Here is a 442-residue protein sequence, read N- to C-terminus: Probable serine/threonine-protein kinase PBL17 (442 aa).

Glycine 2 carries N-myristoyl glycine lipidation. Cysteine 4 carries the S-palmitoyl cysteine lipid modification. Position 79 is a phosphothreonine (threonine 79). The region spanning 90–370 is the Protein kinase domain; it reads FRPDYILGEG…NHVVEVLETL (281 aa). ATP is bound by residues 96 to 104 and lysine 125; that span reads LGEGGFGVV. Tyrosine 170 carries the post-translational modification Phosphotyrosine. Catalysis depends on aspartate 220, which acts as the Proton acceptor. At serine 254 the chain carries Phosphoserine. A phosphothreonine mark is found at threonine 255 and threonine 260. Tyrosine 268 bears the Phosphotyrosine mark. The disordered stretch occupies residues 385 to 442; it reads HSRGKSVTLYEASSDSQGTRDGNGQRRRRPESGRSKSEAAVDTEKYVSTLSEPDTTKI. A compositionally biased stretch (polar residues) spans 395–406; the sequence is EASSDSQGTRDG. Basic and acidic residues predominate over residues 414–429; sequence PESGRSKSEAAVDTEK. A compositionally biased stretch (polar residues) spans 430–442; it reads YVSTLSEPDTTKI.

This sequence belongs to the protein kinase superfamily. Ser/Thr protein kinase family.

Its subcellular location is the cell membrane. The catalysed reaction is L-seryl-[protein] + ATP = O-phospho-L-seryl-[protein] + ADP + H(+). It carries out the reaction L-threonyl-[protein] + ATP = O-phospho-L-threonyl-[protein] + ADP + H(+). Functionally, may be involved in plant defense signaling. In Arabidopsis thaliana (Mouse-ear cress), this protein is Probable serine/threonine-protein kinase PBL17.